The sequence spans 225 residues: Superoxide dismutase [Mn], mitochondrial (225 aa).

A mitochondrion-targeting transit peptide spans 1-27 (MITAITRTALPRATLRTSLATMSTIRA). Mn(2+) contacts are provided by H53, H101, D187, and H191.

The protein belongs to the iron/manganese superoxide dismutase family. Mn(2+) serves as cofactor.

The protein localises to the mitochondrion. Its subcellular location is the cytoplasm. It carries out the reaction 2 superoxide + 2 H(+) = H2O2 + O2. Its function is as follows. Destroys radicals which are normally produced within the cells and which are toxic to biological systems. In terms of biological role, destroys mitochondrial radicals produced by oxidative stress. Functionally, destroys cytoplasmic radicals produced in low copper environments; a condition which inactivates the cytoplasmic copper-dependent superoxide dismutase SOD1. The protein is Superoxide dismutase [Mn], mitochondrial of Cryptococcus neoformans var. grubii serotype A (strain H99 / ATCC 208821 / CBS 10515 / FGSC 9487) (Filobasidiella neoformans var. grubii).